The chain runs to 87 residues: Small ribosomal subunit protein bS20 (87 aa).

Positions 1–22 are disordered; it reads MAHHKSAIKRIKQNAKKNARNR.

This sequence belongs to the bacterial ribosomal protein bS20 family.

Binds directly to 16S ribosomal RNA. In Pelobacter propionicus (strain DSM 2379 / NBRC 103807 / OttBd1), this protein is Small ribosomal subunit protein bS20.